Reading from the N-terminus, the 169-residue chain is Crossover junction endodeoxyribonuclease RuvC (169 aa).

Catalysis depends on residues Asp-13, Glu-73, and Asp-145. Residues Asp-13, Glu-73, and Asp-145 each coordinate Mg(2+).

Belongs to the RuvC family. In terms of assembly, homodimer which binds Holliday junction (HJ) DNA. The HJ becomes 2-fold symmetrical on binding to RuvC with unstacked arms; it has a different conformation from HJ DNA in complex with RuvA. In the full resolvosome a probable DNA-RuvA(4)-RuvB(12)-RuvC(2) complex forms which resolves the HJ. Mg(2+) serves as cofactor.

It is found in the cytoplasm. It carries out the reaction Endonucleolytic cleavage at a junction such as a reciprocal single-stranded crossover between two homologous DNA duplexes (Holliday junction).. In terms of biological role, the RuvA-RuvB-RuvC complex processes Holliday junction (HJ) DNA during genetic recombination and DNA repair. Endonuclease that resolves HJ intermediates. Cleaves cruciform DNA by making single-stranded nicks across the HJ at symmetrical positions within the homologous arms, yielding a 5'-phosphate and a 3'-hydroxyl group; requires a central core of homology in the junction. The consensus cleavage sequence is 5'-(A/T)TT(C/G)-3'. Cleavage occurs on the 3'-side of the TT dinucleotide at the point of strand exchange. HJ branch migration catalyzed by RuvA-RuvB allows RuvC to scan DNA until it finds its consensus sequence, where it cleaves and resolves the cruciform DNA. This is Crossover junction endodeoxyribonuclease RuvC from Solidesulfovibrio magneticus (strain ATCC 700980 / DSM 13731 / RS-1) (Desulfovibrio magneticus).